Consider the following 533-residue polypeptide: Methyl-accepting chemotaxis protein IV (533 aa).

Over 1–6 (MFNRIR) the chain is Cytoplasmic. The helical transmembrane segment at 7-33 (ISTTLFLILILCGILQIGSNGMSFWAF) threads the bilayer. Residues 34–188 (RDDLQRLNQV…AQSQRNYQIS (155 aa)) are Periplasmic-facing. Residues 189-209 (ALVFISMIIVAAIYISSALWW) form a helical membrane-spanning segment. Residues 210 to 533 (TRKMIVQPLA…VQLQIAPVVS (324 aa)) lie on the Cytoplasmic side of the membrane. In terms of domain architecture, HAMP spans 212–264 (KMIVQPLAIIGSHFDSIAAGNLARPIAVYGRNEITAIFASLKTMQQALRGTVS). Positions 269–498 (GSQEMHIGIA…EAAVATEQLA (230 aa)) constitute a Methyl-accepting transducer domain. A glutamate methyl ester (Gln) mark is found at Gln293, Gln300, and Gln307. Glu489 carries the post-translational modification Glutamate methyl ester (Glu).

The protein belongs to the methyl-accepting chemotaxis (MCP) protein family.

Its subcellular location is the cell inner membrane. In terms of biological role, mediates taxis toward dipeptides via an interaction with the periplasmic dipeptide-binding protein. Chemotactic-signal transducers respond to changes in the concentration of attractants and repellents in the environment, transduce a signal from the outside to the inside of the cell, and facilitate sensory adaptation through the variation of the level of methylation. Attractants increase the level of methylation while repellents decrease the level of methylation, the methyl groups are added by the methyltransferase CheR and removed by the methylesterase CheB. The protein is Methyl-accepting chemotaxis protein IV (tap) of Escherichia coli (strain K12).